Consider the following 795-residue polypeptide: Phenylalanine--tRNA ligase beta subunit (795 aa).

The 110-residue stretch at 39 to 148 (AGSFNGVVVG…ADAPLGTDIR (110 aa)) folds into the tRNA-binding domain. In terms of domain architecture, B5 spans 401–476 (PKRATITLRR…RVYGYNNIPD (76 aa)). 4 residues coordinate Mg(2+): Asp-454, Asp-460, Glu-463, and Glu-464. The FDX-ACB domain maps to 701–794 (SRFPANRRDI…LKERFQASLR (94 aa)).

Belongs to the phenylalanyl-tRNA synthetase beta subunit family. Type 1 subfamily. In terms of assembly, tetramer of two alpha and two beta subunits. The cofactor is Mg(2+).

Its subcellular location is the cytoplasm. It catalyses the reaction tRNA(Phe) + L-phenylalanine + ATP = L-phenylalanyl-tRNA(Phe) + AMP + diphosphate + H(+). The polypeptide is Phenylalanine--tRNA ligase beta subunit (Salmonella choleraesuis (strain SC-B67)).